We begin with the raw amino-acid sequence, 432 residues long: MLSKVPATIEEIAAREILDSRGRPTIEAEVRLESGAHGIAQVPSGASTGSFEAHELRDGDPKRYDGKGVEKAVRNVTEKIAPVVEGLDAFDQMAVDQAMIDRDGTDNKKELGANAILGVSLATAKAAAAELAIPLYRYLGGPLANVLPVPMMNVINGGAHADNNVDFQEFMIMPVGAETFKEALRWGAEVFAVLGKVLKERKLLSGGVGDEGGYAPNLTSNQQALDILIEAIEQAGYKPGSQIALAMDIAASEFFKNGQYEYDGGSHSPQEFIDYQAKLVSQYPIVSIEDGLHEDDWESWKGLTTSLGTKTQLVGDDLMVTNPVRLQKSIDLGVANAILIKLNQIGTLSETLETISLATRHSYRSVISHRSGETEDTTIADLAVATRVGQIKTGSLCRSERVAKYNRLLRIEDELGDRAVYAPKIGLGPKHS.

A disordered region spans residues glutamine 41–tyrosine 64. The span at glutamate 52–tyrosine 64 shows a compositional bias: basic and acidic residues. A (2R)-2-phosphoglycerate-binding site is contributed by glutamine 168. Glutamate 211 (proton donor) is an active-site residue. Mg(2+)-binding residues include aspartate 248, glutamate 289, and aspartate 316. (2R)-2-phosphoglycerate is bound by residues lysine 341, arginine 370, serine 371, and lysine 392. Lysine 341 serves as the catalytic Proton acceptor.

It belongs to the enolase family. Mg(2+) is required as a cofactor.

It localises to the cytoplasm. The protein localises to the secreted. It is found in the cell surface. It carries out the reaction (2R)-2-phosphoglycerate = phosphoenolpyruvate + H2O. Its pathway is carbohydrate degradation; glycolysis; pyruvate from D-glyceraldehyde 3-phosphate: step 4/5. In terms of biological role, catalyzes the reversible conversion of 2-phosphoglycerate (2-PG) into phosphoenolpyruvate (PEP). It is essential for the degradation of carbohydrates via glycolysis. This is Enolase from Synechocystis sp. (strain ATCC 27184 / PCC 6803 / Kazusa).